The primary structure comprises 453 residues: Cytochrome b-c1 complex subunit 2, mitochondrial (453 aa).

A mitochondrion-targeting transit peptide spans 1 to 14 (MKLLTRAGSLSRFY). An N6-acetyllysine mark is found at Lys-66, Lys-199, and Lys-250.

Belongs to the peptidase M16 family. UQCRC2/QCR2 subfamily. In terms of assembly, component of the ubiquinol-cytochrome c oxidoreductase (cytochrome b-c1 complex, complex III, CIII), a multisubunit enzyme composed of 11 subunits. The complex is composed of 3 respiratory subunits cytochrome b, cytochrome c1 and Rieske protein UQCRFS1, 2 core protein subunits UQCRC1/QCR1 and UQCRC2/QCR2, and 6 low-molecular weight protein subunits UQCRH/QCR6, UQCRB/QCR7, UQCRQ/QCR8, UQCR10/QCR9, UQCR11/QCR10 and subunit 9, the cleavage product of Rieske protein UQCRFS1. The complex exists as an obligatory dimer and forms supercomplexes (SCs) in the inner mitochondrial membrane with NADH-ubiquinone oxidoreductase (complex I, CI) and cytochrome c oxidase (complex IV, CIV), resulting in different assemblies (supercomplex SCI(1)III(2)IV(1) and megacomplex MCI(2)III(2)IV(2)). Interacts with RAB5IF. Interacts with STMP1.

Its subcellular location is the mitochondrion inner membrane. Component of the ubiquinol-cytochrome c oxidoreductase, a multisubunit transmembrane complex that is part of the mitochondrial electron transport chain which drives oxidative phosphorylation. The respiratory chain contains 3 multisubunit complexes succinate dehydrogenase (complex II, CII), ubiquinol-cytochrome c oxidoreductase (cytochrome b-c1 complex, complex III, CIII) and cytochrome c oxidase (complex IV, CIV), that cooperate to transfer electrons derived from NADH and succinate to molecular oxygen, creating an electrochemical gradient over the inner membrane that drives transmembrane transport and the ATP synthase. The cytochrome b-c1 complex catalyzes electron transfer from ubiquinol to cytochrome c, linking this redox reaction to translocation of protons across the mitochondrial inner membrane, with protons being carried across the membrane as hydrogens on the quinol. In the process called Q cycle, 2 protons are consumed from the matrix, 4 protons are released into the intermembrane space and 2 electrons are passed to cytochrome c. The 2 core subunits UQCRC1/QCR1 and UQCRC2/QCR2 are homologous to the 2 mitochondrial-processing peptidase (MPP) subunits beta-MPP and alpha-MPP respectively, and they seem to have preserved their MPP processing properties. May be involved in the in situ processing of UQCRFS1 into the mature Rieske protein and its mitochondrial targeting sequence (MTS)/subunit 9 when incorporated into complex III. This is Cytochrome b-c1 complex subunit 2, mitochondrial (UQCRC2) from Bos taurus (Bovine).